The following is a 161-amino-acid chain: Arachidonate 5-lipoxygenase-activating protein (161 aa).

Topologically, residues Met-1–Asn-8 are lumenal. A helical transmembrane segment spans residues Val-9–Val-30. Residues Glu-31–Arg-52 lie on the Cytoplasmic side of the membrane. Residues Val-53–Leu-77 traverse the membrane as a helical segment. Residues Cys-78–Gln-80 are Lumenal-facing. Residues Val-81–Leu-102 form a helical membrane-spanning segment. At Gly-103–Gln-107 the chain is on the cytoplasmic side. Residues Ser-108–Gly-115 lie within the membrane without spanning it. A helical transmembrane segment spans residues Lys-116–Ala-128. Topologically, residues Gly-129 to Pro-161 are lumenal.

This sequence belongs to the MAPEG family. In terms of assembly, homotrimer. Interacts with LTC4S and ALOX5.

It is found in the nucleus membrane. Its subcellular location is the endoplasmic reticulum membrane. In terms of biological role, required for leukotriene biosynthesis by ALOX5 (5-lipoxygenase). Anchors ALOX5 to the membrane. Binds arachidonic acid, and could play an essential role in the transfer of arachidonic acid to ALOX5. Binds to MK-886, a compound that blocks the biosynthesis of leukotrienes. The sequence is that of Arachidonate 5-lipoxygenase-activating protein (Alox5ap) from Mus musculus (Mouse).